Consider the following 377-residue polypeptide: Erythronate-4-phosphate dehydrogenase (377 aa).

Substrate-binding residues include serine 45 and threonine 67. NAD(+) contacts are provided by residues aspartate 147, 210–212 (ASR), and aspartate 236. Residue arginine 212 is part of the active site. Glutamate 241 is an active-site residue. Histidine 258 functions as the Proton donor in the catalytic mechanism. Position 261 (glycine 261) interacts with NAD(+). Residue tyrosine 262 participates in substrate binding.

It belongs to the D-isomer specific 2-hydroxyacid dehydrogenase family. PdxB subfamily. As to quaternary structure, homodimer.

The protein resides in the cytoplasm. It catalyses the reaction 4-phospho-D-erythronate + NAD(+) = (R)-3-hydroxy-2-oxo-4-phosphooxybutanoate + NADH + H(+). It functions in the pathway cofactor biosynthesis; pyridoxine 5'-phosphate biosynthesis; pyridoxine 5'-phosphate from D-erythrose 4-phosphate: step 2/5. In terms of biological role, catalyzes the oxidation of erythronate-4-phosphate to 3-hydroxy-2-oxo-4-phosphonooxybutanoate. The chain is Erythronate-4-phosphate dehydrogenase from Aeromonas salmonicida (strain A449).